The primary structure comprises 541 residues: Methyl-accepting chemotaxis protein PcaY (541 aa).

At 1–10 (MLANLKIRTG) the chain is on the cytoplasmic side. Residues 11 to 31 (MFWVLSLFSLTLLFSTASAWW) form a helical membrane-spanning segment. Residues 32–189 (AAVGSDQQIT…ESDRRLARAQ (158 aa)) lie on the Periplasmic side of the membrane. Residues 35–187 (GSDQQITELD…MLESDRRLAR (153 aa)) form a ligand-binding domain region. A helical membrane pass occupies residues 190-210 (LLSLCLLGMTVVLAVLCWAFI). Residues 211–541 (AQRVLHPLRE…MTALVGRFKV (331 aa)) lie on the Cytoplasmic side of the membrane. The HAMP domain occupies 212 to 264 (QRVLHPLREAGGHFRRIASGDLSVPVQGQGNNEIGQLFHELQRMQQSQRDTLG). One can recognise a Methyl-accepting transducer domain in the interval 269 to 505 (CARQLDAAAS…EVDRNLLNIR (237 aa)). Residues 322-341 (TSQTTSESNQLAAQSRRQVS) form a disordered region.

This sequence belongs to the methyl-accepting chemotaxis (MCP) protein family.

It localises to the cell inner membrane. In terms of biological role, chemotactic-signal transducers respond to changes in the concentration of attractants and repellents in the environment, transduce a signal from the outside to the inside of the cell, and facilitate sensory adaptation through the variation of the level of methylation. PcaY is responsible for the detection of multiple aromatic and hydroaromatic compounds that are metabolized through the beta-ketoadipate catabolic pathway, including vanillin, vanillate, 4-hydroxybenzoate (4-HBA), benzoate and protocatechuate. It also senses several nonmetabolizable aromatic compounds. The sequence is that of Methyl-accepting chemotaxis protein PcaY from Pseudomonas putida (strain ATCC 700007 / DSM 6899 / JCM 31910 / BCRC 17059 / LMG 24140 / F1).